The chain runs to 853 residues: E3 ubiquitin-protein ligase RNF216 (853 aa).

Disordered regions lie at residues 33-102 (TISD…DDIV), 125-152 (PLEV…ASVD), and 165-228 (PYFQ…AHPL). Acidic residues predominate over residues 53 to 73 (QQEDDLDDDVILTEDDSEDEY). Lys-89 participates in a covalent cross-link: Glycyl lysine isopeptide (Lys-Gly) (interchain with G-Cter in SUMO2). Glycyl lysine isopeptide (Lys-Gly) (interchain with G-Cter in SUMO2) cross-links involve residues Lys-339 and Lys-342. Ser-407 is subject to Phosphoserine. Glycyl lysine isopeptide (Lys-Gly) (interchain with G-Cter in SUMO2) cross-links involve residues Lys-413, Lys-418, Lys-436, Lys-447, and Lys-473. Residues 463–479 (VKQEQEFYEQKIKEMAE) are a coiled coil. Residues 499-716 (QLIECRCCYG…SPGAPCQECS (218 aa)) are TRIAD supradomain. Positions 503, 506, 525, 528, 593, and 596 each coordinate Zn(2+). The segment at 503-552 (CRCCYGEFPFEELTQCADAHLFCKECLIRYAQEAVFGSGKSELSCMEGSC) adopts an RING-type 1 zinc-finger fold. The segment at 571-636 (YKYYERKAEE…LWKEHNGLTC (66 aa)) adopts an IBR-type zinc-finger fold. Lys-607 is covalently cross-linked (Glycyl lysine isopeptide (Lys-Gly) (interchain with G-Cter in SUMO2)). 6 residues coordinate Zn(2+): Cys-611, Cys-616, Cys-621, Cys-624, His-631, and Cys-636. Glycyl lysine isopeptide (Lys-Gly) (interchain with G-Cter in SUMO2) cross-links involve residues Lys-646 and Lys-654. 2 residues coordinate Zn(2+): Cys-663 and Cys-666. The RING-type 2; atypical zinc finger occupies 663 to 691 (CHKCGTGLIKSEGCNRMSCRCGAQMCYLC). The active site involves Cys-676. Zn(2+) is bound by residues Cys-681, Cys-683, Cys-688, Cys-691, His-704, and Cys-712. Residues 725-751 (TEDDEKLIEEIQKEAEEEQKRKNGENT) adopt a coiled-coil conformation. Residues Lys-753 and Lys-761 each participate in a glycyl lysine isopeptide (Lys-Gly) (interchain with G-Cter in SUMO2) cross-link.

In terms of assembly, interacts with UBE2L3 and to some extent with UBE2L6. Interacts with TRAF3, TLR3, TLR4, TLR5 and TLR9. Isoform 3/ZIN binds RIPK1. Auto-ubiquitinated. In terms of processing, phosphorylation at Ser-719 enhances acceptor ubiquitin binding and chain-type specificity towards 'Lys-63' di-ubiquitin but not di-ubiquitin with other linkage types.

The protein localises to the cytoplasm. It is found in the cytoplasmic vesicle. Its subcellular location is the clathrin-coated vesicle. It catalyses the reaction S-ubiquitinyl-[E2 ubiquitin-conjugating enzyme]-L-cysteine + [acceptor protein]-L-lysine = [E2 ubiquitin-conjugating enzyme]-L-cysteine + N(6)-ubiquitinyl-[acceptor protein]-L-lysine.. Its pathway is protein modification; protein ubiquitination. Its activity is regulated as follows. Allosterically activated by 'Lys-63'-linked di-ubiquitin. In terms of biological role, E3 ubiquitin ligase which accepts ubiquitin from specific E2 ubiquitin-conjugating enzymes, and then transfers it to substrates promoting their ubiquitination. Plays a role in the regulation of antiviral responses by promoting the degradation of TRAF3, TLR4 and TLR9. In turn, down-regulates NF-kappa-B and IRF3 activation as well as beta interferon production. Also participates in the regulation of autophagy by ubiquitinating BECN1 leading to its degradation and autophagy inhibition. Plays a role in ARC-dependent synaptic plasticity by mediating ARC ubiquitination resulting in its rapid proteasomal degradation. Plays aso an essential role in spermatogenesis and male fertility. Mechanistically, regulates meiosis by promoting the degradation of PRKACB through the ubiquitin-mediated lysosome pathway. Modulates the gonadotropin-releasing hormone signal pathway by affecting the stability of STAU2 that is required for the microtubule-dependent transport of neuronal RNA from the cell body to the dendrite. This is E3 ubiquitin-protein ligase RNF216 (Rnf216) from Mus musculus (Mouse).